A 388-amino-acid chain; its full sequence is Mannitol-1-phosphate 5-dehydrogenase (388 aa).

4-15 (AVHFGAGNIGRG) is an NAD(+) binding site.

The protein belongs to the mannitol dehydrogenase family.

The enzyme catalyses D-mannitol 1-phosphate + NAD(+) = beta-D-fructose 6-phosphate + NADH + H(+). This is Mannitol-1-phosphate 5-dehydrogenase from Thermoanaerobacter pseudethanolicus (strain ATCC 33223 / 39E) (Clostridium thermohydrosulfuricum).